Consider the following 152-residue polypeptide: Transcriptional repressor NrdR (152 aa).

A zinc finger lies at 3-33 (CSICKKGETSVVDSRPTEDGTAIRRRRLCVC). The region spanning 48-138 (IMVVKKNGRK…VYRNFREEKD (91 aa)) is the ATP-cone domain.

It belongs to the NrdR family. Requires Zn(2+) as cofactor.

Its function is as follows. Negatively regulates transcription of bacterial ribonucleotide reductase nrd genes and operons by binding to NrdR-boxes. The protein is Transcriptional repressor NrdR of Pelagibacter ubique (strain HTCC1062).